Here is a 228-residue protein sequence, read N- to C-terminus: MKFAVLVFPGSNCDADLYHAIVDVCHEEAAYVSYTATSLAGFDAVLIPGGFSYDDYLRSGAIAKLAPIMTAVVAFAKAGKPVLGICNGFQILTEAGLLPGALLPNRQTHFICETVTLQVENNDTRFTNQYAKGATIALPIAHGEGNYYCDPETLAQLHANHQIAFTYTTDVNGSLDNIAGITNEAGNVLGMMPHPERAVEVLLGSADGLGVFQSILTTLKSGVVTHGE.

In terms of domain architecture, Glutamine amidotransferase type-1 spans 3-225 (FAVLVFPGSN…LTTLKSGVVT (223 aa)). Cys86 acts as the Nucleophile in catalysis. Active-site residues include His194 and Glu196.

Part of the FGAM synthase complex composed of 1 PurL, 1 PurQ and 2 PurS subunits.

It localises to the cytoplasm. It carries out the reaction N(2)-formyl-N(1)-(5-phospho-beta-D-ribosyl)glycinamide + L-glutamine + ATP + H2O = 2-formamido-N(1)-(5-O-phospho-beta-D-ribosyl)acetamidine + L-glutamate + ADP + phosphate + H(+). It catalyses the reaction L-glutamine + H2O = L-glutamate + NH4(+). Its pathway is purine metabolism; IMP biosynthesis via de novo pathway; 5-amino-1-(5-phospho-D-ribosyl)imidazole from N(2)-formyl-N(1)-(5-phospho-D-ribosyl)glycinamide: step 1/2. Functionally, part of the phosphoribosylformylglycinamidine synthase complex involved in the purines biosynthetic pathway. Catalyzes the ATP-dependent conversion of formylglycinamide ribonucleotide (FGAR) and glutamine to yield formylglycinamidine ribonucleotide (FGAM) and glutamate. The FGAM synthase complex is composed of three subunits. PurQ produces an ammonia molecule by converting glutamine to glutamate. PurL transfers the ammonia molecule to FGAR to form FGAM in an ATP-dependent manner. PurS interacts with PurQ and PurL and is thought to assist in the transfer of the ammonia molecule from PurQ to PurL. In Latilactobacillus sakei subsp. sakei (strain 23K) (Lactobacillus sakei subsp. sakei), this protein is Phosphoribosylformylglycinamidine synthase subunit PurQ.